The chain runs to 234 residues: Cytidylate kinase (234 aa).

10–18 (GYSACGKST) contacts ATP.

This sequence belongs to the cytidylate kinase family. Type 1 subfamily.

The protein localises to the cytoplasm. The catalysed reaction is CMP + ATP = CDP + ADP. It carries out the reaction dCMP + ATP = dCDP + ADP. The chain is Cytidylate kinase from Cytophaga hutchinsonii (strain ATCC 33406 / DSM 1761 / CIP 103989 / NBRC 15051 / NCIMB 9469 / D465).